A 270-amino-acid chain; its full sequence is Bis(5'-nucleosyl)-tetraphosphatase, symmetrical (270 aa).

The protein belongs to the Ap4A hydrolase family.

It carries out the reaction P(1),P(4)-bis(5'-adenosyl) tetraphosphate + H2O = 2 ADP + 2 H(+). In terms of biological role, hydrolyzes diadenosine 5',5'''-P1,P4-tetraphosphate to yield ADP. The polypeptide is Bis(5'-nucleosyl)-tetraphosphatase, symmetrical (Haemophilus ducreyi (strain 35000HP / ATCC 700724)).